Consider the following 485-residue polypeptide: Fumarate hydratase, mitochondrial (485 aa).

A mitochondrion-targeting transit peptide spans 1–19; that stretch reads MLSASRKLNNQQFLKTIRN. Substrate is bound by residues 118-120, 150-153, 160-162, and Thr208; these read SGT, HPND, and SSN. The active-site Proton donor/acceptor is His209. The active site involves Ser339. Substrate-binding positions include Ser340 and 345–347; that span reads KVN.

Belongs to the class-II fumarase/aspartase family. Fumarase subfamily. In terms of assembly, homotetramer.

The protein resides in the mitochondrion. The protein localises to the cytoplasm. It catalyses the reaction (S)-malate = fumarate + H2O. It functions in the pathway carbohydrate metabolism; tricarboxylic acid cycle; (S)-malate from fumarate: step 1/1. Functionally, catalyzes the reversible stereospecific interconversion of fumarate to L-malate. Its function is as follows. Catalyzes the hydration of fumarate to L-malate in the tricarboxylic acid (TCA) cycle to facilitate a transition step in the production of energy in the form of NADH. In Dictyostelium discoideum (Social amoeba), this protein is Fumarate hydratase, mitochondrial.